The chain runs to 286 residues: ATP synthase gamma chain (286 aa).

Belongs to the ATPase gamma chain family. In terms of assembly, F-type ATPases have 2 components, CF(1) - the catalytic core - and CF(0) - the membrane proton channel. CF(1) has five subunits: alpha(3), beta(3), gamma(1), delta(1), epsilon(1). CF(0) has three main subunits: a, b and c.

It is found in the cell inner membrane. Produces ATP from ADP in the presence of a proton gradient across the membrane. The gamma chain is believed to be important in regulating ATPase activity and the flow of protons through the CF(0) complex. This is ATP synthase gamma chain from Shewanella piezotolerans (strain WP3 / JCM 13877).